A 37-amino-acid polypeptide reads, in one-letter code: Large ribosomal subunit protein bL36c (37 aa).

It belongs to the bacterial ribosomal protein bL36 family.

It is found in the plastid. It localises to the chloroplast. The polypeptide is Large ribosomal subunit protein bL36c (Tupiella akineta (Green alga)).